A 118-amino-acid polypeptide reads, in one-letter code: Large ribosomal subunit protein bL17 (118 aa).

This sequence belongs to the bacterial ribosomal protein bL17 family. In terms of assembly, part of the 50S ribosomal subunit. Contacts protein L32.

In Hydrogenobaculum sp. (strain Y04AAS1), this protein is Large ribosomal subunit protein bL17.